A 134-amino-acid polypeptide reads, in one-letter code: DNA-binding protein inhibitor ID-2 (134 aa).

Phosphoserine is present on residues Ser14 and Ser25. In terms of domain architecture, bHLH spans Ser23–Leu75. The short motif at Leu106–Leu115 is the Nuclear export signal element.

As to quaternary structure, interacts with GATA4 and NKX2-5. Interacts with NR0B2. Interacts with CLOCK and BMAL1. Interacts with IFI204. Interacts with NEDD9/HEF1. Interacts with ASB4; this interaction promotes ID2 proteasomal degradation. In terms of processing, ubiquitinated in a ASB4-depedent manner, leading to proteasomal degradation. Post-translationally, phosphorylated in vitro by CDK1, PKA and PKC.

The protein localises to the cytoplasm. It is found in the nucleus. Transcriptional regulator (lacking a basic DNA binding domain) which negatively regulates the basic helix-loop-helix (bHLH) transcription factors by forming heterodimers and inhibiting their DNA binding and transcriptional activity. Implicated in regulating a variety of cellular processes, including cellular growth, senescence, differentiation, apoptosis, angiogenesis, and neoplastic transformation. Inhibits skeletal muscle and cardiac myocyte differentiation. Regulates the circadian clock by repressing the transcriptional activator activity of the CLOCK-BMAL1 heterodimer. Restricts the CLOCK and BMAL1 localization to the cytoplasm. Plays a role in both the input and output pathways of the circadian clock: in the input component, is involved in modulating the magnitude of photic entrainment and in the output component, contributes to the regulation of a variety of liver clock-controlled genes involved in lipid metabolism. This chain is DNA-binding protein inhibitor ID-2 (ID2), found in Sus scrofa (Pig).